The chain runs to 634 residues: Biosynthetic arginine decarboxylase (634 aa).

The residue at position 103 (K103) is an N6-(pyridoxal phosphate)lysine. 283 to 293 contacts substrate; the sequence is FDVGGGLGVDY.

Belongs to the Orn/Lys/Arg decarboxylase class-II family. SpeA subfamily. It depends on Mg(2+) as a cofactor. Pyridoxal 5'-phosphate serves as cofactor.

The catalysed reaction is L-arginine + H(+) = agmatine + CO2. Its pathway is amine and polyamine biosynthesis; agmatine biosynthesis; agmatine from L-arginine: step 1/1. Catalyzes the biosynthesis of agmatine from arginine. This is Biosynthetic arginine decarboxylase from Photorhabdus laumondii subsp. laumondii (strain DSM 15139 / CIP 105565 / TT01) (Photorhabdus luminescens subsp. laumondii).